A 693-amino-acid chain; its full sequence is Elongation factor G 1 (693 aa).

Positions 4–281 (NKLRNIGISA…AVTRFLPSPH (278 aa)) constitute a tr-type G domain. GTP-binding positions include 13–20 (AHIDSGKT), 80–84 (DTPGH), and 134–137 (NKCD).

It belongs to the TRAFAC class translation factor GTPase superfamily. Classic translation factor GTPase family. EF-G/EF-2 subfamily.

The protein localises to the cytoplasm. Catalyzes the GTP-dependent ribosomal translocation step during translation elongation. During this step, the ribosome changes from the pre-translocational (PRE) to the post-translocational (POST) state as the newly formed A-site-bound peptidyl-tRNA and P-site-bound deacylated tRNA move to the P and E sites, respectively. Catalyzes the coordinated movement of the two tRNA molecules, the mRNA and conformational changes in the ribosome. The polypeptide is Elongation factor G 1 (Borreliella afzelii (strain PKo) (Borrelia afzelii)).